A 320-amino-acid chain; its full sequence is Zinc finger protein 330 (320 aa).

The tract at residues 1–23 (MPKKKTGARKKAENRREREKQLR) is disordered. The short motif at 3-11 (KKKTGARKK) is the Nuclear localization signal element. The span at 10-22 (KKAENRREREKQL) shows a compositional bias: basic and acidic residues. 4 consecutive C4-type zinc fingers follow at residues 42–58 (CDKC…CYFC), 67–104 (CAQC…CDFC), 129–149 (CVEC…CSFC), and 175–189 (CVSC…CLRC). A disordered region spans residues 206–320 (EKGKQPPCPK…GYAHYEEQEN (115 aa)). Basic and acidic residues predominate over residues 216–225 (CGHETQETKD). The segment covering 269–285 (DEEEDEYEAEDDEEEED) has biased composition (acidic residues). Ser-291 is modified (phosphoserine).

This sequence belongs to the NOA36 family. Widely expressed. Higher expression seen in heart and skeletal muscle.

It is found in the nucleus. The protein resides in the nucleolus. The protein localises to the chromosome. Its subcellular location is the centromere. The sequence is that of Zinc finger protein 330 (ZNF330) from Homo sapiens (Human).